The chain runs to 1883 residues: Lysophospholipase NTE1 (1883 aa).

Over 1–75 (MSQVPVASPA…LLRVVLASLN (75 aa)) the chain is Cytoplasmic. A helical transmembrane segment spans residues 76-96 (LIRILATFSTITVPSLVYAIL). At 97-103 (HYSLTLQ) the chain is on the lumenal side. Residues 104-124 (LNFPSLALLFLTSLISAFIWL) traverse the membrane as a helical segment. The Cytoplasmic segment spans residues 125 to 1883 (RYRHLNKYER…AGISARRNSI (1759 aa)). Disordered regions lie at residues 284–327 (HLAP…FNPP), 355–410 (ERLG…LYHA), 618–693 (SQRS…MVGP), 716–764 (SAQP…RKGS), 921–1069 (EEDR…ATNS), and 1084–1108 (LHQQQPLRGKPSQQSSQRSKDGKRS). Residues 311-327 (NNATAPTSPYSSAFNPP) show a composition bias toward polar residues. Residues 372–383 (ARTASSGTASAT) are compositionally biased toward low complexity. Polar residues predominate over residues 650-668 (PSLTTSSKQSNQKPTSSRI). Residues 863–1158 (AGHG…RRPI) and 1166–1285 (RLLS…IARR) contribute to the a nucleoside 3',5'-cyclic phosphate site. Positions 936 to 948 (TDASSGSSRQNRP) are enriched in polar residues. Residues 964-974 (LLDERNLREAD) show a composition bias toward basic and acidic residues. Polar residues-rich tracts occupy residues 988-998 (ISSNGDGNSGS) and 1084-1100 (LHQQQPLRGKPSQQSSQ). One can recognise a PNPLA domain in the interval 1544 to 1708 (LVLGGGGARG…VDNLPVTVML (165 aa)). Positions 1548-1553 (GGGARG) match the GXGXXG motif. The GXSXG signature appears at 1575–1579 (GTSIG). Ser-1577 functions as the Nucleophile in the catalytic mechanism. The Proton acceptor role is filled by Asp-1695. Residues 1695–1697 (DGG) carry the DGA/G motif. Residues 1852–1883 (DESGVGGGVRKIRKKRRRTRRKAGISARRNSI) form a disordered region. The span at 1861 to 1874 (RKIRKKRRRTRRKA) shows a compositional bias: basic residues.

This sequence belongs to the NTE family.

The protein resides in the endoplasmic reticulum membrane. The enzyme catalyses a 1-acyl-sn-glycero-3-phosphocholine + H2O = sn-glycerol 3-phosphocholine + a fatty acid + H(+). Inhibited by organophosphorus esters. Its function is as follows. Intracellular phospholipase B that catalyzes the double deacylation of phosphatidylcholine (PC) to glycerophosphocholine (GroPCho). Plays an important role in membrane lipid homeostasis. Responsible for the rapid PC turnover in response to inositol, elevated temperatures, or when choline is present in the growth medium. This chain is Lysophospholipase NTE1 (NTE1), found in Mycosarcoma maydis (Corn smut fungus).